The following is a 271-amino-acid chain: Nodulin-26 (271 aa).

Helical transmembrane passes span 40 to 62 and 72 to 94; these read LVAE…VVNE and GIAI…ISGG. Positions 97 to 99 match the NPA 1 motif; it reads NPA. A run of 3 helical transmembrane segments spans residues 115 to 137, 152 to 174, and 181 to 203; these read VPAY…RLLF, TNLQ…ICGV, and VGEF…GGPV. Positions 209–211 match the NPA 2 motif; that stretch reads NPA. A helical membrane pass occupies residues 225-247; sequence GIWIYLLAPVVGAIAGAWVYNIV. Ser262 carries the post-translational modification Phosphoserine; by CPK.

Belongs to the MIP/aquaporin (TC 1.A.8) family. NIP (TC 1.A.8.12) subfamily.

It localises to the symbiosome. The protein resides in the peribacteroid membrane. Aquaporins facilitate the transport of water and small neutral solutes across cell membranes. This aquaporin may function in transporting small molecules across the peribacteroid membranes. This chain is Nodulin-26, found in Glycine max (Soybean).